A 416-amino-acid polypeptide reads, in one-letter code: Histidine--tRNA ligase (416 aa).

It belongs to the class-II aminoacyl-tRNA synthetase family.

The protein resides in the cytoplasm. The catalysed reaction is tRNA(His) + L-histidine + ATP = L-histidyl-tRNA(His) + AMP + diphosphate + H(+). This chain is Histidine--tRNA ligase (hisS), found in Methanocaldococcus jannaschii (strain ATCC 43067 / DSM 2661 / JAL-1 / JCM 10045 / NBRC 100440) (Methanococcus jannaschii).